We begin with the raw amino-acid sequence, 119 residues long: Ribosome-binding factor A (119 aa).

This sequence belongs to the RbfA family. As to quaternary structure, monomer. Binds 30S ribosomal subunits, but not 50S ribosomal subunits or 70S ribosomes.

It is found in the cytoplasm. Functionally, one of several proteins that assist in the late maturation steps of the functional core of the 30S ribosomal subunit. Associates with free 30S ribosomal subunits (but not with 30S subunits that are part of 70S ribosomes or polysomes). Required for efficient processing of 16S rRNA. May interact with the 5'-terminal helix region of 16S rRNA. The sequence is that of Ribosome-binding factor A from Citrifermentans bemidjiense (strain ATCC BAA-1014 / DSM 16622 / JCM 12645 / Bem) (Geobacter bemidjiensis).